Consider the following 348-residue polypeptide: MESIRIIPEVPSFLNQVLSVDAWNILFLVGQALVIFLVVVIVAALMIIYERRMLALWQDRYGPNRVGPWGSLQLVADMLKIFFKEDWTPKFADKFMFILAPAVAMFTALASFAIIPVSPMLGVADWNIGILFFFAMAGMAVYAVMFGGWASQNKYSLLGGLRSAAQTISYEVFLGLSLMGVVAMTGSFNLRDIVVAQQGGFWHWNIFPQFLGFLTFVVAGVAVTHRHPFDQPEAEQELAEGYHVEYSGMKFGMFFIGEYVNVVLISALMTCLFFGGWDAPLNLGFTILPPAFWFMIKTLFFMTMFVLARGSLMRPRYDQVMNFGWKVCLPVTLINLMITAALILISAA.

The next 8 membrane-spanning stretches (helical) occupy residues 25 to 45 (ILFL…VAAL), 95 to 115 (FMFI…FAII), 128 to 148 (IGIL…MFGG), 168 to 188 (ISYE…TGSF), 204 to 224 (WNIF…VAVT), 254 to 274 (FFIG…CLFF), 287 to 307 (ILPP…MFVL), and 327 to 347 (VCLP…LISA).

The protein belongs to the complex I subunit 1 family. In terms of assembly, NDH-1 is composed of 14 different subunits. Subunits NuoA, H, J, K, L, M, N constitute the membrane sector of the complex.

It localises to the cell inner membrane. The catalysed reaction is a quinone + NADH + 5 H(+)(in) = a quinol + NAD(+) + 4 H(+)(out). In terms of biological role, NDH-1 shuttles electrons from NADH, via FMN and iron-sulfur (Fe-S) centers, to quinones in the respiratory chain. The immediate electron acceptor for the enzyme in this species is believed to be ubiquinone. Couples the redox reaction to proton translocation (for every two electrons transferred, four hydrogen ions are translocated across the cytoplasmic membrane), and thus conserves the redox energy in a proton gradient. This subunit may bind ubiquinone. This chain is NADH-quinone oxidoreductase subunit H, found in Psychrobacter sp. (strain PRwf-1).